The primary structure comprises 191 residues: Adenylate kinase (191 aa).

Position 11-16 (11-16 (GAGKGT)) interacts with ATP. The tract at residues 31 to 60 (STGDILRSNVAERSPLGIKAKDYMDKGDLV) is NMP. AMP contacts are provided by residues T32, R37, 58–60 (DLV), 86–89 (GFPR), and Q93. Residues 132–138 (SRKREDD) form an LID region. R133 serves as a coordination point for ATP. R135 and R146 together coordinate AMP. N174 is an ATP binding site.

Belongs to the adenylate kinase family. As to quaternary structure, monomer.

The protein localises to the cytoplasm. The enzyme catalyses AMP + ATP = 2 ADP. It participates in purine metabolism; AMP biosynthesis via salvage pathway; AMP from ADP: step 1/1. Catalyzes the reversible transfer of the terminal phosphate group between ATP and AMP. Plays an important role in cellular energy homeostasis and in adenine nucleotide metabolism. The protein is Adenylate kinase of Trichodesmium erythraeum (strain IMS101).